Reading from the N-terminus, the 230-residue chain is Large ribosomal subunit protein uL1 (230 aa).

This sequence belongs to the universal ribosomal protein uL1 family. Part of the 50S ribosomal subunit.

Its function is as follows. Binds directly to 23S rRNA. The L1 stalk is quite mobile in the ribosome, and is involved in E site tRNA release. Protein L1 is also a translational repressor protein, it controls the translation of the L11 operon by binding to its mRNA. This Caldicellulosiruptor bescii (strain ATCC BAA-1888 / DSM 6725 / KCTC 15123 / Z-1320) (Anaerocellum thermophilum) protein is Large ribosomal subunit protein uL1.